The following is a 490-amino-acid chain: Hexokinase (490 aa).

One can recognise a Hexokinase domain in the interval 21-466 (QNLLEHIKHF…SGVGAALIAA (446 aa)). Positions 75–209 (DGKETGTFLA…GLPIKVAALI (135 aa)) are hexokinase small subdomain. The hexokinase large subdomain stretch occupies residues 210 to 455 (NDTTGTLIAS…DKVTIHAAED (246 aa)).

This sequence belongs to the hexokinase family. As to quaternary structure, monomer.

The catalysed reaction is a D-hexose + ATP = a D-hexose 6-phosphate + ADP + H(+). It catalyses the reaction D-fructose + ATP = D-fructose 6-phosphate + ADP + H(+). It carries out the reaction D-glucose + ATP = D-glucose 6-phosphate + ADP + H(+). The protein operates within carbohydrate metabolism; hexose metabolism. It functions in the pathway carbohydrate degradation; glycolysis; D-glyceraldehyde 3-phosphate and glycerone phosphate from D-glucose: step 1/4. Functionally, catalyzes the phosphorylation of hexose, such as D-glucose and D-fructose, to hexose 6-phosphate (D-glucose 6-phosphate and D-fructose 6-phosphate, respectively). Mediates the initial step of glycolysis by catalyzing phosphorylation of D-glucose to D-glucose 6-phosphate. The chain is Hexokinase (hxkA) from Emericella nidulans (strain FGSC A4 / ATCC 38163 / CBS 112.46 / NRRL 194 / M139) (Aspergillus nidulans).